The chain runs to 103 residues: Stefin-2 (103 aa).

A Secondary area of contact motif is present at residues 52–56 (QVVQG).

The protein belongs to the cystatin family.

It localises to the cytoplasm. Its function is as follows. This is an intracellular thiol proteinase inhibitor. This chain is Stefin-2 (Stfa2), found in Mus musculus (Mouse).